The following is a 469-amino-acid chain: SWI/SNF complex subunit SWI3B (469 aa).

The segment at 1-42 is disordered; sequence MAMKAPDPGGSGEILPSTPSLSETTSGGAAAASKSAQLPSSS. Positions 15–42 are enriched in low complexity; sequence LPSTPSLSETTSGGAAAASKSAQLPSSS. Residues 48 to 145 form the SWIRM domain; it reads IHVPSYSSWF…YNSSASAKPL (98 aa). Residues 223-274 enclose the SANT domain; sequence ESKPEWSDKEILLLLEAVMHYGDDWKKVASHVIGRTEKDCVSQFVKLPFGEQ. 2 stretches are compositionally biased toward basic and acidic residues: residues 293 to 306 and 360 to 369; these read DSDI…DKDG and DKNASRDPNR. Disordered regions lie at residues 293 to 314 and 360 to 387; these read DSDI…KRIK and DKNA…ESER. Positions 370 to 380 are enriched in polar residues; the sequence is QDANAASSGET. Positions 423-447 form a coiled coil; it reads VHFEKLDLEMERSRKQLEEVRNLLF.

In terms of assembly, homodimers and heterodimers. Interacts with SWI3A, SWI3C, SWI3D, BSH, BRM and FCA (via C-terminus), and (via N-terminus) with HAB1. Interacts with MORC6 and SUVH9. As to expression, expressed in roots, stems, leaves, flowers and siliques.

It localises to the nucleus. In terms of biological role, component of a multiprotein complex equivalent of the SWI/SNF complex, an ATP-dependent chromatin-remodeling complex, which is required for the positive and negative regulation of gene expression of a large number of genes. It changes chromatin structure by altering DNA-histone contacts within a nucleosome, leading eventually to a change in nucleosome position, thus facilitating or repressing binding of gene-specific transcription factors. May play an essential role in the transition from the vegetative to the reproductive phase of development. May be a positive regulator of ABA signaling. The chain is SWI/SNF complex subunit SWI3B (SWI3B) from Arabidopsis thaliana (Mouse-ear cress).